We begin with the raw amino-acid sequence, 634 residues long: Formate--tetrahydrofolate ligase (634 aa).

78-85 is a binding site for ATP; sequence TPLGEGKS.

This sequence belongs to the formate--tetrahydrofolate ligase family. As to quaternary structure, homodimer.

It catalyses the reaction (6S)-5,6,7,8-tetrahydrofolate + formate + ATP = (6R)-10-formyltetrahydrofolate + ADP + phosphate. It functions in the pathway one-carbon metabolism; tetrahydrofolate interconversion. The sequence is that of Formate--tetrahydrofolate ligase (THFS) from Arabidopsis thaliana (Mouse-ear cress).